The sequence spans 263 residues: Glutamate 5-kinase (263 aa).

Lys15 serves as a coordination point for ATP. Residues Ser55, Asp142, and Asn154 each contribute to the substrate site. Residues 174–175 (SD) and 216–222 (TGGIETK) contribute to the ATP site.

Belongs to the glutamate 5-kinase family.

It is found in the cytoplasm. It catalyses the reaction L-glutamate + ATP = L-glutamyl 5-phosphate + ADP. Its pathway is amino-acid biosynthesis; L-proline biosynthesis; L-glutamate 5-semialdehyde from L-glutamate: step 1/2. In terms of biological role, catalyzes the transfer of a phosphate group to glutamate to form L-glutamate 5-phosphate. The protein is Glutamate 5-kinase of Alkaliphilus oremlandii (strain OhILAs) (Clostridium oremlandii (strain OhILAs)).